The chain runs to 944 residues: MDEASHLPNGSLKNMEFTPVGFIKSKRNTTQTQVVSPTKVPNANNGDENEGPVKKRQRRSIDDTIDSTRLFSEASQFDDSFPEIKANIPPSPRSGNVDKSRKRNLIDDLKKDVPMSQPLKEQEVREHQMKKERFDRALESKLLGKRHITYANSDISNKELYINEIKSLKHEIKELRKEKNDTLNNYDTLEEETDDLKNRLQALEKELDAKNKIVNSRKVDDHSGCIEEREQMERKLAELERKLKTVKDQVLELENNSDVQSLKLRSKEDELKNLMNELNELKSNAEEKDTQLEFKKNELRKRTNELNELKIKSDEMDLQLKQKQNESKRLKDELNELETKFSENGSQSSAKENELKMLKNKIAELEEEISTKNSQLIAKEGKLASLMAHLTQLESKLNQRDSQLGSREEELKKTNDKLQKDIRIAREETVSKDERITDLQKKVKQLENDLFVIKKTHSESKTITDNELESKDKLIKILENDLKVAQEKYSKMEKELKEREFNYKISESKLEDEKTTLNEKISNLAAENSQLKNKIEDNSTATHHMKENYEKQLESLRKDIEEYKESAKDSEDKIEELKIRIAENSAKVSEKRSKDIKQKDEQISDLTQNLKLQEDEISSLKSIIDRYKKDFNQLKSEQSNIQHDLNLQILNLENKLIESEDELKSLRDSQKIEIENWKRKYNNLSLENDRLLTEKESASDKEREISILNRKLDEMDKEKWNLQESKEKYKRELQKVITANDRLRREKEELNENSNNIRIMEDKMTRIKKNYLSEITSLQEENRRLEERLILNERRKDNDSTMQLNDIISYYKLKYHSEVRHNNDLKVINDYLNKVLALGTRRLRLDTRKGEHSLNISLPDDDELDRDYYNSHVYTRYHDYEYPLRFNLNRRGPYFERRLSFKTVALLVLACVRMKRIAFYRRSDDNRLRILRDRIESSSGRISW.

Thr-18 carries the post-translational modification Phosphothreonine. The segment at 23-110 (IKSKRNTTQT…RKRNLIDDLK (88 aa)) is disordered. Over residues 28–46 (NTTQTQVVSPTKVPNANNG) the composition is skewed to polar residues. The Nuclear localization signal motif lies at 54-59 (KKRQRR). Position 60 is a phosphoserine; by MPS1 (Ser-60). Phosphothreonine; by MPS1 occurs at positions 64 and 68. The span at 67–78 (STRLFSEASQFD) shows a compositional bias: polar residues. At Ser-80 the chain carries Phosphoserine. The span at 96–110 (NVDKSRKRNLIDDLK) shows a compositional bias: basic and acidic residues. The stretch at 119 to 799 (LKEQEVREHQ…ILNERRKDND (681 aa)) forms a coiled coil. Position 529 is a phosphoserine (Ser-529). 2 consecutive short sequence motifs (nuclear localization signal) follow at residues 726–731 (KEKYKR) and 742–747 (RLRREK). Residues 900-927 (SFKTVALLVLACVRMKRIAFYRRSDDNR) form a calmodulin-binding region.

The protein belongs to the SPC110 family. In terms of assembly, homodimer. Component of the SPC110 complex containing at least CMD1, SPC29 and SCP110. Interacts with SPC97 and SPC98.

It is found in the nucleus. The protein localises to the cytoplasm. Its subcellular location is the cytoskeleton. It localises to the microtubule organizing center. The protein resides in the spindle pole body. Functionally, component of the spindle pole body (SPB) required for the proper execution of spindle pole body (SPB) duplication. Potential role in cross-linking filaments or anchoring other molecules. It is essential for growth. This is Spindle pole body component 110 (SPC110) from Saccharomyces cerevisiae (strain YJM789) (Baker's yeast).